The following is a 409-amino-acid chain: Putative competence-damage inducible protein (409 aa).

Belongs to the CinA family.

This is Putative competence-damage inducible protein from Clostridium botulinum (strain Okra / Type B1).